Consider the following 108-residue polypeptide: UPF0060 membrane protein CJA_3703 (108 aa).

The next 4 membrane-spanning stretches (helical) occupy residues 6–26 (LLFVVTALAEIIGCFLPYLWL), 31–51 (SIWLLLPAALSLALFAWLLTL), 61–81 (AAYGGVYVAVALLWLYWVDGV), and 85–105 (AYDWAGAAVALLGMAIIAMGW).

The protein belongs to the UPF0060 family.

It is found in the cell inner membrane. The sequence is that of UPF0060 membrane protein CJA_3703 from Cellvibrio japonicus (strain Ueda107) (Pseudomonas fluorescens subsp. cellulosa).